Consider the following 447-residue polypeptide: Serine/threonine-protein phosphatase 2A 55 kDa regulatory subunit B gamma isoform (447 aa).

WD repeat units follow at residues 22–61 (TEAD…KNAP), 87–128 (EIEE…KRPE), 171–209 (GHTY…RSFN), 220–260 (DLTE…LCDK), 279–317 (EIIS…RPIE), 334–375 (ENDC…DVTL), and 410–446 (DFTK…NSDM).

The protein belongs to the phosphatase 2A regulatory subunit B family. In terms of assembly, PP2A consists of a common heterodimeric core enzyme, composed of a 36 kDa catalytic subunit (subunit C) and a 65 kDa constant regulatory subunit (PR65 or subunit A), that associates with a variety of regulatory subunits. Proteins that associate with the core dimer include three families of regulatory subunits B (the R2/B/PR55/B55, R3/B''/PR72/PR130/PR59 and R5/B'/B56 families), the 48 kDa variable regulatory subunit, viral proteins, and cell signaling molecules. Interacts with IER5.

The B regulatory subunit might modulate substrate selectivity and catalytic activity, and might also direct the localization of the catalytic enzyme to a particular subcellular compartment. The polypeptide is Serine/threonine-protein phosphatase 2A 55 kDa regulatory subunit B gamma isoform (PPP2R2C) (Homo sapiens (Human)).